The chain runs to 116 residues: Large ribosomal subunit protein bL20c (116 aa).

This sequence belongs to the bacterial ribosomal protein bL20 family.

It localises to the plastid. The protein resides in the chloroplast. Functionally, binds directly to 23S ribosomal RNA and is necessary for the in vitro assembly process of the 50S ribosomal subunit. It is not involved in the protein synthesizing functions of that subunit. The chain is Large ribosomal subunit protein bL20c from Rhodomonas salina (Cryptomonas salina).